A 782-amino-acid polypeptide reads, in one-letter code: Formin-like protein 9 (782 aa).

Residues Met1–Ala24 form the signal peptide. The helical transmembrane segment at Leu102–Phe122 threads the bilayer. Disordered regions lie at residues Asp191–Glu223, Met264–Val287, and Ser387–Val407. The segment covering Glu214–Glu223 has biased composition (acidic residues). A compositionally biased stretch (pro residues) spans Ala396–Val407. Residues Leu406–Asp782 form the FH2 domain.

This sequence belongs to the formin-like family. Class-I subfamily.

Its subcellular location is the membrane. In terms of biological role, might be involved in the organization and polarity of the actin cytoskeleton. In Arabidopsis thaliana (Mouse-ear cress), this protein is Formin-like protein 9 (FH9).